The primary structure comprises 226 residues: SPI-1 type 3 secretion system stator protein (226 aa).

In terms of assembly, the core secretion machinery of the T3SS is composed of approximately 20 different proteins, including cytoplasmic components, a base, an export apparatus and a needle. This subunit is part of the cytosolic complex. Interacts directly with InvC/SctN1 (T3SS-1 ATPase) and SpaO/SctQ (the major sorting platform component).

The protein localises to the cytoplasm. Its function is as follows. Component of the type III secretion system (T3SS), also called injectisome, which is used to inject bacterial effector proteins into eukaryotic host cells. Acts as a regulator of the InvC/SctN1 ATPase activity. Required for invasion and secretion. The sequence is that of SPI-1 type 3 secretion system stator protein from Salmonella typhimurium (strain SL1344).